The sequence spans 123 residues: Small ribosomal subunit protein uS13 (123 aa).

Residues 97–123 (PVRGQRTHTNAKTRKGRSRLPVAAKKK) are disordered.

Belongs to the universal ribosomal protein uS13 family. In terms of assembly, part of the 30S ribosomal subunit. Forms a loose heterodimer with protein S19. Forms two bridges to the 50S subunit in the 70S ribosome.

Functionally, located at the top of the head of the 30S subunit, it contacts several helices of the 16S rRNA. In the 70S ribosome it contacts the 23S rRNA (bridge B1a) and protein L5 of the 50S subunit (bridge B1b), connecting the 2 subunits; these bridges are implicated in subunit movement. Contacts the tRNAs in the A and P-sites. This chain is Small ribosomal subunit protein uS13, found in Ehrlichia ruminantium (strain Gardel).